A 521-amino-acid polypeptide reads, in one-letter code: BAR/IMD domain-containing adapter protein 2 (521 aa).

The IMD domain maps to 1–250; the sequence is MSLSRSEEMH…VQLMQQMGNS (250 aa). A coiled-coil region spans residues 132 to 153; the sequence is DALDKCQAELKKLRKKSQGSKN. 4 positions are modified to phosphoserine: Ser-262, Ser-324, Ser-326, and Ser-337. The disordered stretch occupies residues 297-370; it reads APVMNGVSGP…TLPRSSSMAA (74 aa). Positions 321-333 are enriched in low complexity; that stretch reads QPKSTSPPQSQSK. Residue Thr-341 is modified to Phosphothreonine. Ser-347 carries the phosphoserine modification. The span at 353–368 shows a compositional bias: polar residues; the sequence is SYATTENKTLPRSSSM. Phosphothreonine is present on Thr-361. Phosphoserine occurs at positions 367, 385, 396, and 455. The SH3 domain occupies 375 to 438; it reads NGRMRVKAIF…PFSYTRVLDN (64 aa). Positions 450-471 are disordered; that stretch reads QGKSSSTGNLLDKEDLALPPPD.

In terms of assembly, homodimer. Interacts with CDC42 and RAC1 that have been activated by GTP binding. Interacts with ATN1, ADGRB1, DIAPH1, EPS8, SHANK1, SHANK2, SHANK3, TIAM1, WASF1 and WASF2. Interacts with ENAH after recruitment of CDC42. Post-translationally, phosphorylated on tyrosine residues by INSR in response to insulin treatment.

Its subcellular location is the cytoplasm. The protein localises to the membrane. The protein resides in the cell projection. It localises to the filopodium. It is found in the ruffle. Its subcellular location is the cytoskeleton. In terms of biological role, adapter protein that links membrane-bound small G-proteins to cytoplasmic effector proteins. Necessary for CDC42-mediated reorganization of the actin cytoskeleton and for RAC1-mediated membrane ruffling. Involved in the regulation of the actin cytoskeleton by WASF family members and the Arp2/3 complex. Plays a role in neurite growth. Acts syngeristically with ENAH to promote filipodia formation. Plays a role in the reorganization of the actin cytoskeleton in response to bacterial infection. Participates in actin bundling when associated with EPS8, promoting filopodial protrusions. This is BAR/IMD domain-containing adapter protein 2 (BAIAP2) from Bos taurus (Bovine).